A 622-amino-acid chain; its full sequence is MALRGLIRQSKVRRRREMLPQQVGFVCAVLALVCCASGLFGSLGHKTASAGKHVLLDTWRNRKLMAPINGTPLAKNCTDPAIHEFPTDLFSNKERQHGAVLLHILGALYMFYALAIVCDDFFVPSLEKICEKLHLSEDVAGATFMAAGSSTPELFASVIGVFITHGDVGVGTIVGSAVFNILCIIGVCGLFAGQVVRLTWWAVCRDSVYYTLSVIVLIAFIYDEEIVWWEGLVLIILYVFYILIMKYNMKMQTFFTTKQKSIANGNPVSNELEDGNDLYDGSYDDPSVPLLGQVKEKPPYGKTPVVMVDEILSSSPPKFTFPEAGLRIMITNKFGPRTRLRMASRIIINERQRLINSANGVNSKPLQNGRHENMENGNVPVENPEDPQQGQEQQPPPQPPPPEPESVETVFLSPFSMPEAKGDKAKWVFTWPLIFLLCVTIPNCSKPRWEKFFMVTFITATLWIAVFSYLMVWLVTIIGYTLGIPDVIMGITFLAAGTSVPDCMASLIVARQGLGDMAVSNTIGSNVFDILVGLGIPWGLQTMVINYGSTVKINSRGLVYSVVLLLGSVALTVLGIHLNKWRLDRKLGIYVLVLYAVFLCFSIMIEFNVFTFVNLPMCREDD.

The signal sequence occupies residues 1–38 (MALRGLIRQSKVRRRREMLPQQVGFVCAVLALVCCASG). At 39–97 (LFGSLGHKTASAGKHVLLDTWRNRKLMAPINGTPLAKNCTDPAIHEFPTDLFSNKERQH) the chain is on the extracellular side. An N-linked (GlcNAc...) asparagine glycan is attached at Asn-76. A helical membrane pass occupies residues 98 to 118 (GAVLLHILGALYMFYALAIVC). Residues 119–142 (DDFFVPSLEKICEKLHLSEDVAGA) lie on the Cytoplasmic side of the membrane. One copy of the Alpha-1 repeat lies at 139–179 (VAGATFMAAGSSTPELFASVIGVFITHGDVGVGTIVGSAVF). Residues 143-163 (TFMAAGSSTPELFASVIGVFI) form a helical membrane-spanning segment. Residues 164-172 (THGDVGVGT) lie on the Extracellular side of the membrane. Residues 173 to 193 (IVGSAVFNILCIIGVCGLFAG) form a helical membrane-spanning segment. Topologically, residues 194-200 (QVVRLTW) are cytoplasmic. A helical transmembrane segment spans residues 201–221 (WAVCRDSVYYTLSVIVLIAFI). The Extracellular portion of the chain corresponds to 222-224 (YDE). The helical transmembrane segment at 225 to 245 (EIVWWEGLVLIILYVFYILIM) threads the bilayer. The Cytoplasmic segment spans residues 246–457 (KYNMKMQTFF…RWEKFFMVTF (212 aa)). Positions 358–408 (ANGVNSKPLQNGRHENMENGNVPVENPEDPQQGQEQQPPPQPPPPEPESVE) are disordered. Over residues 394–404 (QPPPQPPPPEP) the composition is skewed to pro residues. A helical membrane pass occupies residues 458 to 478 (ITATLWIAVFSYLMVWLVTII). Residue Gly-479 is a topological domain, extracellular. Residues 480–500 (YTLGIPDVIMGITFLAAGTSV) traverse the membrane as a helical segment. An Alpha-2 repeat occupies 495–526 (AAGTSVPDCMASLIVARQGLGDMAVSNTIGSN). Over 501 to 526 (PDCMASLIVARQGLGDMAVSNTIGSN) the chain is Cytoplasmic. Residues 527–547 (VFDILVGLGIPWGLQTMVINY) traverse the membrane as a helical segment. Residues 548 to 557 (GSTVKINSRG) are Extracellular-facing. The helical transmembrane segment at 558-578 (LVYSVVLLLGSVALTVLGIHL) threads the bilayer. Topologically, residues 579–586 (NKWRLDRK) are cytoplasmic. A helical membrane pass occupies residues 587–607 (LGIYVLVLYAVFLCFSIMIEF). Topologically, residues 608–622 (NVFTFVNLPMCREDD) are extracellular.

The protein belongs to the Ca(2+):cation antiporter (CaCA) (TC 2.A.19) family. SLC24A subfamily. Expressed in late secretory-stage and maturation-stage ameloblasts, with significantly increased expression during the late stages of amelogenesis (at protein level). Widely expressed in most regions of the brain, including hippocampus, neocortex, thalamus, striatum and olfactory bulb. Expressed in the olfactory sensory neurons.

The protein resides in the cell membrane. It localises to the cytoplasm. It catalyses the reaction Ca(2+)(out) + K(+)(out) + 4 Na(+)(in) = Ca(2+)(in) + K(+)(in) + 4 Na(+)(out). Functionally, calcium, potassium:sodium antiporter that transports 1 Ca(2+) and 1 K(+) in exchange for 4 Na(+). Controls the rapid response termination and proper regulation of adaptation in olfactory sensory neurons (OSNs) which subsequently influences how odor information is encoded and perceived. May play a role in calcium transport during amelogenesis. The sequence is that of Sodium/potassium/calcium exchanger 4 from Mus musculus (Mouse).